Consider the following 200-residue polypeptide: MPPLLKLALELGPLLVFFFANARGEMLIERFPILGSIGAPIFLATALFMAATVIALAISWSMTRTLPIMPLVSGIVVLVFGALTLWLHNDTFIKMKPTIVNTLFGGILLGGLFFGKSLLGYVFDSAFRLDAEGWRKLTLRWGLFFIFLAIVNEIVWRNFSTDTWVSFKVWGIMPITIVFTLLQMPLIQKHSLTDEENTAS.

6 helical membrane-spanning segments follow: residues 1 to 21 (MPPL…FFAN), 37 to 57 (IGAP…IALA), 66 to 86 (LPIM…LTLW), 103 to 123 (LFGG…GYVF), 136 to 156 (KLTL…EIVW), and 167 to 187 (FKVW…MPLI).

It belongs to the YciB family.

The protein resides in the cell inner membrane. Functionally, plays a role in cell envelope biogenesis, maintenance of cell envelope integrity and membrane homeostasis. The protein is Inner membrane-spanning protein YciB of Brucella suis biovar 1 (strain 1330).